Reading from the N-terminus, the 435-residue chain is ATP-dependent protease ATPase subunit HslU (435 aa).

ATP is bound by residues V18, 60–65, D248, E313, and R385; that span reads GVGKTE.

Belongs to the ClpX chaperone family. HslU subfamily. In terms of assembly, a double ring-shaped homohexamer of HslV is capped on each side by a ring-shaped HslU homohexamer. The assembly of the HslU/HslV complex is dependent on binding of ATP.

It localises to the cytoplasm. ATPase subunit of a proteasome-like degradation complex; this subunit has chaperone activity. The binding of ATP and its subsequent hydrolysis by HslU are essential for unfolding of protein substrates subsequently hydrolyzed by HslV. HslU recognizes the N-terminal part of its protein substrates and unfolds these before they are guided to HslV for hydrolysis. This chain is ATP-dependent protease ATPase subunit HslU, found in Azorhizobium caulinodans (strain ATCC 43989 / DSM 5975 / JCM 20966 / LMG 6465 / NBRC 14845 / NCIMB 13405 / ORS 571).